Consider the following 192-residue polypeptide: Anthranilate synthase component 2 (192 aa).

In terms of domain architecture, Glutamine amidotransferase type-1 spans 1-192; that stretch reads MIVLVNNRDS…KNFVEMSRNG (192 aa). Residue 50–52 coordinates L-glutamine; that stretch reads GPG. The Nucleophile; for GATase activity role is filled by Cys-78. L-glutamine-binding positions include Gln-82 and 127–128; that span reads SL. Catalysis depends on for GATase activity residues His-165 and Glu-167.

As to quaternary structure, heterotetramer consisting of two non-identical subunits: a beta subunit (TrpG) and a large alpha subunit (TrpE).

It catalyses the reaction chorismate + L-glutamine = anthranilate + pyruvate + L-glutamate + H(+). Its pathway is amino-acid biosynthesis; L-tryptophan biosynthesis; L-tryptophan from chorismate: step 1/5. Functionally, part of a heterotetrameric complex that catalyzes the two-step biosynthesis of anthranilate, an intermediate in the biosynthesis of L-tryptophan. In the first step, the glutamine-binding beta subunit (TrpG) of anthranilate synthase (AS) provides the glutamine amidotransferase activity which generates ammonia as a substrate that, along with chorismate, is used in the second step, catalyzed by the large alpha subunit of AS (TrpE) to produce anthranilate. In the absence of TrpG, TrpE can synthesize anthranilate directly from chorismate and high concentrations of ammonia. The polypeptide is Anthranilate synthase component 2 (trpG) (Thermococcus kodakarensis (strain ATCC BAA-918 / JCM 12380 / KOD1) (Pyrococcus kodakaraensis (strain KOD1))).